An 89-amino-acid polypeptide reads, in one-letter code: Small ribosomal subunit protein uS17 (89 aa).

Belongs to the universal ribosomal protein uS17 family. Part of the 30S ribosomal subunit.

Its function is as follows. One of the primary rRNA binding proteins, it binds specifically to the 5'-end of 16S ribosomal RNA. The protein is Small ribosomal subunit protein uS17 of Xanthomonas campestris pv. campestris (strain B100).